A 707-amino-acid polypeptide reads, in one-letter code: MGNMRSLVKMLMVVLFLGWIFVWIMISTNRFQNIWTPKLAKYLKTTYFGPQGMNLVLLTVPMMFIAVLSCVYLHTQKQPSQTQSLYKCREWKVKGRMGRVMMVMNPLGIVTATELTFSLLFLALLVWALSNYLYLSYHVHLHNHDNANDMCRWQAKFRAFGLRIGYVGHYCWAFLFFPVTRASTILPLVGLTSESSIKYHIWLGHVSNFCFLVHTVVFLIYWAMVNKLMETFAWNATYVPNLAGTIAMVIGIAIWVTSLPSFRRKKFEIFFYTHHLYGLYIVFYAIHVGDSWFCMILPNIFLFFIDRYLRFLQSTKRSRLVSAKILPSDNLELTFAKTSGLHYTPTSILFLHVPSISKLQWHPFTITSSSNLEKDTLSVVIRKQGSWTQKLYTHLSSSIDSLEVSTEGPYGPNSFDVSRHDSLILVGGGSGVTPFISVIRELIFQSQNRSTKLPNVLLVCAFKNYHDLAFLDLIFPSDISVSDISKLNLRIEAYITREDKKPETTDDHKLLQTKWFKPQPLDSPISPVLGPNNFLWLGVVILSSFVMFLLLIGIVTRYYIYPVDHNTGSIYNFTYRVLWVMFLGCVCIFISSSIIFLWRKKENKEGDKDSKKQVQSVEFQTPTSSPGSWFHGHERELESVPYQSIVQATSVHFGSKPNLKKILFEAEGSEDVGVMVCGPKKMRHEVAKICSSGLAKNLHFEAISFNW.

Residues 1–9 (MGNMRSLVK) are Cytoplasmic-facing. Residues 10–29 (MLMVVLFLGWIFVWIMISTN) traverse the membrane as a helical segment. The Extracellular segment spans residues 30–54 (RFQNIWTPKLAKYLKTTYFGPQGMN). Residues 55–73 (LVLLTVPMMFIAVLSCVYL) traverse the membrane as a helical segment. Residues 74–106 (HTQKQPSQTQSLYKCREWKVKGRMGRVMMVMNP) are Cytoplasmic-facing. A helical transmembrane segment spans residues 107–130 (LGIVTATELTFSLLFLALLVWALS). The Extracellular portion of the chain corresponds to 131–198 (NYLYLSYHVH…VGLTSESSIK (68 aa)). The region spanning 165-284 (GYVGHYCWAF…HLYGLYIVFY (120 aa)) is the Ferric oxidoreductase domain. The chain crosses the membrane as a helical span at residues 199–222 (YHIWLGHVSNFCFLVHTVVFLIYW). 2 residues coordinate heme: His-200 and His-214. Over 223 to 272 (AMVNKLMETFAWNATYVPNLAGTIAMVIGIAIWVTSLPSFRRKKFEIFFY) the chain is Cytoplasmic. A helical membrane pass occupies residues 273 to 297 (THHLYGLYIVFYAIHVGDSWFCMIL). His-274 and His-287 together coordinate heme. At 298–319 (PNIFLFFIDRYLRFLQSTKRSR) the chain is on the extracellular side. The region spanning 313–416 (QSTKRSRLVS…EGPYGPNSFD (104 aa)) is the FAD-binding FR-type domain. The helical transmembrane segment at 320-340 (LVSAKILPSDNLELTFAKTSG) threads the bilayer. The Cytoplasmic segment spans residues 341-533 (LHYTPTSILF…PISPVLGPNN (193 aa)). FAD is bound at residue 362–365 (HPFT). 408 to 411 (GPYG) is an NAD(+) binding site. Residues 534 to 556 (FLWLGVVILSSFVMFLLLIGIVT) traverse the membrane as a helical segment. Topologically, residues 557-576 (RYYIYPVDHNTGSIYNFTYR) are extracellular. A helical transmembrane segment spans residues 577–598 (VLWVMFLGCVCIFISSSIIFLW). At 599 to 707 (RKKENKEGDK…LHFEAISFNW (109 aa)) the chain is on the cytoplasmic side. The interval 608–630 (KDSKKQVQSVEFQTPTSSPGSWF) is disordered. Positions 613 to 627 (QVQSVEFQTPTSSPG) are enriched in polar residues.

This sequence belongs to the ferric reductase (FRE) family. FAD is required as a cofactor. As to expression, expressed at low levels in roots, shoots, pedicels and inflorescence stems, flowers, sepals, stigmas and anther filaments.

It is found in the cell membrane. The catalysed reaction is 2 a Fe(II)-siderophore + NAD(+) + H(+) = 2 a Fe(III)-siderophore + NADH. Ferric chelate reductase probably involved in iron reduction in shoots. May participate in the transport of electrons to a Fe(3+) ion via FAD and heme intermediates. May act in iron metabolism in reproductive organs. May function as root surface cupric chelate reductase and participate in the reduction of Cu(2+), for Cu(+) acquisition via Cu(+) transporters in response to copper deficiency. The chain is Ferric reduction oxidase 5 (FRO5) from Arabidopsis thaliana (Mouse-ear cress).